The sequence spans 510 residues: Major facilitator superfamily domain-containing protein 4A (510 aa).

A run of 12 helical transmembrane segments spans residues 19–39, 53–73, 82–102, 107–127, 139–159, 218–238, 303–323, 345–365, 380–400, 401–421, 434–454, and 462–482; these read LTYWSVFFSFGLCIAFLGPTL, ISWVFFSQQLCLLLGSALGGV, LWALFTSTLVISLVFAVIPFC, VLASVIALAGLAMGCIDTVAN, AFFLQVLHFFVGLGALLSPLI, YAFWIMALINLPVPLAVLFLL, FFAIHITAALVLFMTDGMMGA, GYLPSLFWGFITLGRFISIPV, VGVVVTFLMLLIFSYNVIFLF, VGTASLGLFLSSTFPSMLAYT, VLVTGAGIGEMVLQMLVGLIF, and FLVCGVIFGCLAFIFYILLLF.

Belongs to the major facilitator superfamily.

It localises to the membrane. The protein is Major facilitator superfamily domain-containing protein 4A of Mus musculus (Mouse).